The following is a 551-amino-acid chain: Glucose-6-phosphate isomerase (551 aa).

D-glucose 6-phosphate is bound by residues 161–162 (GS), 212–217 (SKTFTT), Q356, E360, H391, and K516. E360 serves as the catalytic Proton donor. Active-site residues include H391 and K516.

This sequence belongs to the GPI family. Homodimer.

It localises to the cytoplasm. It is found in the cytosol. It catalyses the reaction alpha-D-glucose 6-phosphate = beta-D-fructose 6-phosphate. The protein operates within carbohydrate degradation; glycolysis; D-glyceraldehyde 3-phosphate and glycerone phosphate from D-glucose: step 2/4. In terms of biological role, in the cytoplasm, catalyzes the conversion of glucose-6-phosphate to fructose-6-phosphate, the second step in glycolysis, and the reverse reaction during gluconeogenesis. This Agaricus bisporus (White button mushroom) protein is Glucose-6-phosphate isomerase (gpi1).